We begin with the raw amino-acid sequence, 196 residues long: Probable GTP-binding protein EngB (196 aa).

The region spanning 24-196 is the EngB-type G domain; the sequence is ELSEVALSGR…IWNLIEPYIS (173 aa). GTP contacts are provided by residues 32–39, 59–63, 77–80, 144–147, and 176–178; these read GRSNVGKS, GKTQT, DVPG, TKED, and YSS. Mg(2+)-binding residues include Ser39 and Thr61.

It belongs to the TRAFAC class TrmE-Era-EngA-EngB-Septin-like GTPase superfamily. EngB GTPase family. Mg(2+) is required as a cofactor.

Its function is as follows. Necessary for normal cell division and for the maintenance of normal septation. The chain is Probable GTP-binding protein EngB from Staphylococcus aureus (strain Mu3 / ATCC 700698).